Reading from the N-terminus, the 273-residue chain is Dermonecrotic toxin LdSicTox-alphaIB1bi (273 aa).

His5 is a catalytic residue. Glu25 and Asp27 together coordinate Mg(2+). His41 functions as the Nucleophile in the catalytic mechanism. 2 cysteine pairs are disulfide-bonded: Cys45-Cys51 and Cys47-Cys190. Asp85 serves as a coordination point for Mg(2+). The N-linked (GlcNAc...) asparagine glycan is linked to Asn250.

This sequence belongs to the arthropod phospholipase D family. Class II subfamily. It depends on Mg(2+) as a cofactor. In terms of tissue distribution, expressed by the venom gland.

It localises to the secreted. It catalyses the reaction an N-(acyl)-sphingosylphosphocholine = an N-(acyl)-sphingosyl-1,3-cyclic phosphate + choline. It carries out the reaction an N-(acyl)-sphingosylphosphoethanolamine = an N-(acyl)-sphingosyl-1,3-cyclic phosphate + ethanolamine. The catalysed reaction is a 1-acyl-sn-glycero-3-phosphocholine = a 1-acyl-sn-glycero-2,3-cyclic phosphate + choline. The enzyme catalyses a 1-acyl-sn-glycero-3-phosphoethanolamine = a 1-acyl-sn-glycero-2,3-cyclic phosphate + ethanolamine. In terms of biological role, dermonecrotic toxins cleave the phosphodiester linkage between the phosphate and headgroup of certain phospholipids (sphingolipid and lysolipid substrates), forming an alcohol (often choline) and a cyclic phosphate. This toxin acts on sphingomyelin (SM). It may also act on ceramide phosphoethanolamine (CPE), lysophosphatidylcholine (LPC) and lysophosphatidylethanolamine (LPE), but not on lysophosphatidylserine (LPS), and lysophosphatidylglycerol (LPG). It acts by transphosphatidylation, releasing exclusively cyclic phosphate products as second products. Induces dermonecrosis, hemolysis, increased vascular permeability, edema, inflammatory response, and platelet aggregation. This chain is Dermonecrotic toxin LdSicTox-alphaIB1bi, found in Loxosceles deserta (Desert recluse spider).